Here is a 278-residue protein sequence, read N- to C-terminus: D-arabinitol 2-dehydrogenase [ribulose-forming] (278 aa).

NADP(+)-binding residues include leucine 28 and asparagine 49. Residue serine 166 is the Proton donor of the active site. Residues tyrosine 181, lysine 185, isoleucine 214, and threonine 216 each contribute to the NADP(+) site. Catalysis depends on tyrosine 181, which acts as the Proton acceptor. Lysine 185 (lowers pKa of active site Tyr) is an active-site residue.

Belongs to the short-chain dehydrogenases/reductases (SDR) family.

The catalysed reaction is D-arabinitol + NAD(+) = D-ribulose + NADH + H(+). The protein operates within carbohydrate metabolism; D-arabinitol metabolism. This chain is D-arabinitol 2-dehydrogenase [ribulose-forming] (ARDH), found in Scheffersomyces stipitis (strain ATCC 58785 / CBS 6054 / NBRC 10063 / NRRL Y-11545) (Yeast).